The primary structure comprises 473 residues: Response regulator protein FleR (473 aa).

Residues 4–118 (KVLLVEDDRA…ALLDLVARHA (115 aa)) form the Response regulatory domain. The residue at position 53 (aspartate 53) is a 4-aspartylphosphate. Positions 130-359 (PVALEPASRQ…LDNAIQRALI (230 aa)) constitute a Sigma-54 factor interaction domain. ATP-binding positions include 158 to 165 (GESGTGKE) and 221 to 230 (ADGGTILLDE).

In terms of biological role, member of the two-component regulatory system FleS/FleR that regulates the expression of multiple genes involved in flagellar synthesis, adhesion, swarming, motility and antibiotic resistance. May function as a transcriptional activator by direct binding to a cis-acting sequence upstream of the target genes. The chain is Response regulator protein FleR from Pseudomonas aeruginosa (strain ATCC 15692 / DSM 22644 / CIP 104116 / JCM 14847 / LMG 12228 / 1C / PRS 101 / PAO1).